Reading from the N-terminus, the 326-residue chain is Delta-aminolevulinic acid dehydratase (326 aa).

The Zn(2+) site is built by C119, C121, and C129. K198 acts as the Schiff-base intermediate with substrate in catalysis. 5-aminolevulinate is bound by residues R208 and R220. E236 provides a ligand contact to Mg(2+). The Schiff-base intermediate with substrate role is filled by K251. Positions 277 and 316 each coordinate 5-aminolevulinate.

It belongs to the ALAD family. Homooctamer. Zn(2+) serves as cofactor.

It carries out the reaction 2 5-aminolevulinate = porphobilinogen + 2 H2O + H(+). It participates in porphyrin-containing compound metabolism; protoporphyrin-IX biosynthesis; coproporphyrinogen-III from 5-aminolevulinate: step 1/4. In terms of biological role, catalyzes an early step in the biosynthesis of tetrapyrroles. Binds two molecules of 5-aminolevulinate per subunit, each at a distinct site, and catalyzes their condensation to form porphobilinogen. The protein is Delta-aminolevulinic acid dehydratase (hemB) of Synechococcus elongatus (strain ATCC 33912 / PCC 7942 / FACHB-805) (Anacystis nidulans R2).